We begin with the raw amino-acid sequence, 439 residues long: Serine hydroxymethyltransferase (439 aa).

127-129 (AHV) is a (6S)-5,6,7,8-tetrahydrofolate binding site. Lys-233 bears the N6-(pyridoxal phosphate)lysine mark.

This sequence belongs to the SHMT family. As to quaternary structure, homodimer. It depends on pyridoxal 5'-phosphate as a cofactor.

Its subcellular location is the cytoplasm. Its pathway is amino-acid biosynthesis; glycine biosynthesis; glycine from L-serine: step 1/1. Functionally, catalyzes the reversible interconversion of serine and glycine with a modified folate serving as the one-carbon carrier. Also exhibits a pteridine-independent aldolase activity toward beta-hydroxyamino acids, producing glycine and aldehydes, via a retro-aldol mechanism. The sequence is that of Serine hydroxymethyltransferase from Aeropyrum pernix (strain ATCC 700893 / DSM 11879 / JCM 9820 / NBRC 100138 / K1).